The primary structure comprises 225 residues: PKHD-type hydroxylase YbiX (225 aa).

The Fe2OG dioxygenase domain maps to 78 to 177 (TLSTPLFNRY…RVASFMWIQS (100 aa)). Fe cation contacts are provided by H96, D98, and H158. R168 contacts 2-oxoglutarate.

Fe(2+) serves as cofactor. It depends on L-ascorbate as a cofactor.

The sequence is that of PKHD-type hydroxylase YbiX from Escherichia coli O7:K1 (strain IAI39 / ExPEC).